The sequence spans 488 residues: Probable glycine dehydrogenase (decarboxylating) subunit 2 (488 aa).

Lys274 carries the post-translational modification N6-(pyridoxal phosphate)lysine.

This sequence belongs to the GcvP family. C-terminal subunit subfamily. The glycine cleavage system is composed of four proteins: P, T, L and H. In this organism, the P 'protein' is a heterodimer of two subunits. Pyridoxal 5'-phosphate is required as a cofactor.

It carries out the reaction N(6)-[(R)-lipoyl]-L-lysyl-[glycine-cleavage complex H protein] + glycine + H(+) = N(6)-[(R)-S(8)-aminomethyldihydrolipoyl]-L-lysyl-[glycine-cleavage complex H protein] + CO2. Functionally, the glycine cleavage system catalyzes the degradation of glycine. The P protein binds the alpha-amino group of glycine through its pyridoxal phosphate cofactor; CO(2) is released and the remaining methylamine moiety is then transferred to the lipoamide cofactor of the H protein. This is Probable glycine dehydrogenase (decarboxylating) subunit 2 from Listeria welshimeri serovar 6b (strain ATCC 35897 / DSM 20650 / CCUG 15529 / CIP 8149 / NCTC 11857 / SLCC 5334 / V8).